The following is a 155-amino-acid chain: Small ribosomal subunit protein uS7cz/uS7cy (155 aa).

This sequence belongs to the universal ribosomal protein uS7 family. In terms of assembly, part of the 30S ribosomal subunit.

It is found in the plastid. It localises to the chloroplast. Functionally, one of the primary rRNA binding proteins, it binds directly to 16S rRNA where it nucleates assembly of the head domain of the 30S subunit. The chain is Small ribosomal subunit protein uS7cz/uS7cy (rps7-A) from Crucihimalaya wallichii (Rock-cress).